A 402-amino-acid polypeptide reads, in one-letter code: Probable glutamate 5-kinase (402 aa).

Substrate contacts are provided by Ser58, Asp145, and Asn157. ATP-binding positions include 177 to 178 and 218 to 224; these read TD and TGGMKTK. Residues 295–373 form the PUA domain; sequence HGSLEIDRGA…KEIASILGYN (79 aa).

This sequence belongs to the glutamate 5-kinase family.

The protein resides in the cytoplasm. The enzyme catalyses L-glutamate + ATP = L-glutamyl 5-phosphate + ADP. Its pathway is amino-acid biosynthesis; L-proline biosynthesis; L-glutamate 5-semialdehyde from L-glutamate: step 1/2. Functionally, catalyzes the transfer of a phosphate group to glutamate to form glutamate 5-phosphate which rapidly cyclizes to 5-oxoproline. The protein is Probable glutamate 5-kinase of Schizosaccharomyces pombe (strain 972 / ATCC 24843) (Fission yeast).